Here is a 412-residue protein sequence, read N- to C-terminus: NF-kappa-B essential modulator (412 aa).

The interval methionine 1–proline 48 is disordered. The required for interaction with and ubiquitination by MARCHF2 stretch occupies residues methionine 1–valine 197. A phosphoserine; by IKKB mark is found at serine 31 and serine 43. Positions glutamate 44–lysine 111 are interaction with CHUK/IKBKB. Residues glutamate 49–serine 343 are a coiled coil. Position 68 is a phosphoserine (serine 68). Phosphoserine; by ATM is present on serine 85. Glycyl lysine isopeptide (Lys-Gly) (interchain with G-Cter in ubiquitin) cross-links involve residues lysine 111, lysine 139, lysine 143, lysine 226, and lysine 246. The interaction with TANK stretch occupies residues leucine 150–glycine 250. The interval aspartate 242 to serine 343 is ubiquitin-binding (UBAN). The segment at lysine 246 to glutamine 358 is self-association. Positions lysine 249–glutamate 412 are required for interaction with TNFAIP3. A Glycyl lysine isopeptide (Lys-Gly) (interchain with G-Cter in SUMO); alternate cross-link involves residue lysine 270. Lysine 270 participates in a covalent cross-link: Glycyl lysine isopeptide (Lys-Gly) (interchain with G-Cter in ubiquitin); alternate. Glycyl lysine isopeptide (Lys-Gly) (interchain with G-Cter in ubiquitin) cross-links involve residues lysine 276, lysine 278, lysine 285, and lysine 295. Lysine 302 is covalently cross-linked (Glycyl lysine isopeptide (Lys-Gly) (interchain with G-Cter in SUMO); alternate). A Glycyl lysine isopeptide (Lys-Gly) (interchain with G-Cter in ubiquitin); alternate cross-link involves residue lysine 302. Glycyl lysine isopeptide (Lys-Gly) (interchain with G-Cter in ubiquitin) cross-links involve residues lysine 314 and lysine 319. Positions leucine 315 to leucine 336 are leucine-zipper. Serine 369 is modified (phosphoserine; by IKKB). An interaction with CYLD region spans residues serine 375 to glutamate 412. Residue serine 380 is modified to Phosphoserine. Residues proline 382–glutamate 412 form a CCHC NOA-type zinc finger. Cysteine 390 contacts Zn(2+). A Glycyl lysine isopeptide (Lys-Gly) (interchain with G-Cter in ubiquitin) cross-link involves residue lysine 392. The Zn(2+) site is built by cysteine 393, histidine 406, and cysteine 410.

In terms of assembly, homodimer; disulfide-linked. Component of the I-kappa-B-kinase (IKK) core complex consisting of CHUK, IKBKB and IKBKG; probably four alpha/CHUK-beta/IKBKB dimers are associated with four gamma/IKBKG subunits. The IKK core complex seems to associate with regulatory or adapter proteins to form a IKK-signalosome holo-complex. The IKK complex associates with TERF2IP/RAP1, leading to promote IKK-mediated phosphorylation of RELA/p65. Part of a complex composed of NCOA2, NCOA3, CHUK/IKKA, IKBKB, IKBKG and CREBBP. Interacts with COPS3, CYLD, NALP2, TRPC4AP and PIDD1. Interacts with ATM; the complex is exported from the nucleus. Interacts with TRAF6. Interacts with IKBKE. Interacts with TANK; the interaction is enhanced by IKBKE and TBK1. Part of a ternary complex consisting of TANK, IKBKB and IKBKG. Interacts with ZFAND5. Interacts with RIPK2. Interacts with TNIP1 and TNFAIP3; TNIP1 facilitates the TNFAIP3-mediated de-ubiquitination of IKBKG. Interacts with TNFAIP3; the interaction is induced by TNF stimulation and by polyubiquitin. Binds (via UBAN region) polyubiquitin; binds both 'Lys-63'-linked and linear polyubiquitin, with higher affinity for linear ubiquitin. Interacts with NLRP10. Interacts with TANK; this interaction increases in response to DNA damage. Interacts with USP10; this interaction increases in response to DNA damage. Interacts with ZC3H12A; this interaction increases in response to DNA damage. Interacts with IFIT5; the interaction synergizes the recruitment of IKK to MAP3K7 and enhances IKK phosphorylation. Interacts with TRIM29; this interaction induces IKBKG/NEMO ubiquitination and proteolytic degradation. Interacts with TRIM13; this interaction leads to IKBKG/NEMO ubiquitination. Interacts with ARFIP2. Interacts with RIPK1. Interacts with (ubiquitinated) BCL10; interaction with polyubiquitinated BCL10 via both 'Lys-63'-linked and linear ubiquitin is required for TCR-induced NF-kappa-B activation. Interacts with MARCHF2; during the late stages of macrophage viral and bacterial infection; the interaction leads to ubiquitination and degradation of IKBKG/NEMO. Phosphorylation at Ser-68 attenuates aminoterminal homodimerization. In terms of processing, polyubiquitinated on Lys-278 via 'Lys-63'-linked ubiquitin; the ubiquitination is mediated downstream of NOD2 and RIPK2 and probably plays a role in signaling by facilitating interactions with ubiquitin domain-containing proteins and activates the NF-kappa-B pathway. Polyubiquitinated on Lys-278 and Lys-302 through 'Lys-63'-linked ubiquitin; the ubiquitination is mediated by BCL10, MALT1 and TRAF6 and probably plays a role in signaling by facilitating interactions with ubiquitin domain-containing proteins and activates the NF-kappa-B pathway. Monoubiquitinated on Lys-270 and Lys-302; promotes nuclear export. Polyubiquitinated through 'Lys-27' by TRIM23; involved in antiviral innate and inflammatory responses. Linear polyubiquitinated on Lys-111, Lys-143, Lys-226, Lys-246, Lys-270, Lys-278, Lys-285, Lys-295, Lys-302 and Lys-319; the head-to-tail polyubiquitination is mediated by the LUBAC complex and plays a key role in NF-kappa-B activation. Deubiquitinated by USP10 in a TANK-dependent and -independent manner, leading to the negative regulation of NF-kappa-B signaling upon DNA damage. Ubiquitinated at Lys-319 by MARCHF2 following bacterial and viral infection which leads to its degradation. Polyubiquitinated via 'Lys-29'-linked ubiquitin; leading to lysosomal degradation. Post-translationally, sumoylated on Lys-270 and Lys-302 with SUMO1; the modification results in phosphorylation of Ser-85 by ATM leading to a replacement of the sumoylation by mono-ubiquitination on these residues. Neddylated by TRIM40, resulting in stabilization of NFKBIA and down-regulation of NF-kappa-B activity.

It is found in the cytoplasm. It localises to the nucleus. Regulatory subunit of the IKK core complex which phosphorylates inhibitors of NF-kappa-B thus leading to the dissociation of the inhibitor/NF-kappa-B complex and ultimately the degradation of the inhibitor. Its binding to scaffolding polyubiquitin plays a key role in IKK activation by multiple signaling receptor pathways. Can recognize and bind both 'Lys-63'-linked and linear polyubiquitin upon cell stimulation, with a much highr affinity for linear polyubiquitin. Could be implicated in NF-kappa-B-mediated protection from cytokine toxicity. Essential for viral activation of IRF3. Involved in TLR3- and IFIH1-mediated antiviral innate response; this function requires 'Lys-27'-linked polyubiquitination. This Rattus norvegicus (Rat) protein is NF-kappa-B essential modulator (Ikbkg).